Here is a 631-residue protein sequence, read N- to C-terminus: MLYHENFDVIVVGGGHAGTEAALASARTGQKTLLLTHNIDTLGQMSCNPAIGGIGKGHLVKEVDAMGGLMAEAIDHAGIQFRTLNASKGPAVRATRAQADRALYKAYVRNALENAPNLTLFQQSVDDLIVDQDRVVGVVTQMGLKFQAKAVVLTVGTFLGGKIHIGMESSSGGRAGDPPSIALADRLRELPFRVDRLKTGTPPRIDARSVDFSVLEAQHGDNPTPVFSFMGKREHQPRQIPCFITHTNEKTHDVIRNNLDRSPMYAGVIEGIGPRYCPSIEDKVMRFADKNSHQIFIEPEGLTTHELYPNGISTSLPFDVQVQIVRSMKGFENAHIVRPGYAIEYDFFDPRDLKQTYETKFISGLFFAGQINGTTGYEEAAAQGLMAGLNASLHSQGKEGWSPRRDQAYMGVLIDDLSTMGTKEPYRMFTSRAEYRLLLREDNADLRLTEKARELGLIDDARWARFNEKIENMETERQRLKSTWMNPNSAGIDELNKLLKTPMAREASGEDLLRRPEISYSDLTQLDAFAPALEDQQASEQVEIQVKYDGYIKRQQEEIEKSLRHEHTKLPADLDYKDVKGLSNEVVAKLTEAKPESIGIASRISGITPAAISILLVHLKKHGLLKKGEEE.

Residues 13-18 (GGGHAG), valine 125, and serine 180 contribute to the FAD site. 273 to 287 (GPRYCPSIEDKVMRF) serves as a coordination point for NAD(+). Glutamine 370 contributes to the FAD binding site.

Belongs to the MnmG family. In terms of assembly, homodimer. Heterotetramer of two MnmE and two MnmG subunits. It depends on FAD as a cofactor.

The protein localises to the cytoplasm. Functionally, NAD-binding protein involved in the addition of a carboxymethylaminomethyl (cmnm) group at the wobble position (U34) of certain tRNAs, forming tRNA-cmnm(5)s(2)U34. In Vibrio campbellii (strain ATCC BAA-1116), this protein is tRNA uridine 5-carboxymethylaminomethyl modification enzyme MnmG.